The following is a 104-amino-acid chain: uncharacterized protein (104 aa).

Positions 1–23 (MDIHDYVELIALAFWVISVVSVG) are cleaved as a signal peptide.

This is an uncharacterized protein from Lactobacillus helveticus (Lactobacillus suntoryeus).